The sequence spans 403 residues: uncharacterized protein (403 aa).

2 helical membrane-spanning segments follow: residues 29-49 (FVIFSVLFSLIIGFIASCGFL) and 55-75 (AFIASGLCFALLVSVVSFFGC).

This sequence belongs to the chlamydial CPn_0129/CT_036/TC_0306 family.

The protein resides in the cell membrane. This is an uncharacterized protein from Chlamydia trachomatis serovar D (strain ATCC VR-885 / DSM 19411 / UW-3/Cx).